The following is a 278-amino-acid chain: Ras-related protein rapC (278 aa).

Residue 10–17 participates in GTP binding; sequence GASGTGKT. The Effector region signature appears at 32–40; the sequence is YDPTIEDLY. GTP is bound by residues 58 to 62 and 119 to 122; these read DTSGT and NKCD. Disordered stretches follow at residues 176–209 and 236–278; these read NGSS…SSSS and STSS…CLIM. Composition is skewed to low complexity over residues 198–209 and 236–251; these read GSNNSSINSSSS and STSS…SQTN. Cys-275 is modified (cysteine methyl ester). The S-geranylgeranyl cysteine moiety is linked to residue Cys-275. Positions 276–278 are cleaved as a propeptide — removed in mature form; the sequence is LIM.

Belongs to the small GTPase superfamily. Ras family.

The protein resides in the cell membrane. It catalyses the reaction GTP + H2O = GDP + phosphate + H(+). This Dictyostelium discoideum (Social amoeba) protein is Ras-related protein rapC (rapC).